A 391-amino-acid polypeptide reads, in one-letter code: Elongation factor Tu 2 (391 aa).

Residues 10–201 (KPHVNIGTIG…EVDNYIPTPE (192 aa)) enclose the tr-type G domain. The segment at 19 to 26 (GHVDHGKT) is G1. 19-26 (GHVDHGKT) is a binding site for GTP. Threonine 26 contributes to the Mg(2+) binding site. A G2 region spans residues 55 to 59 (GITIS). The G3 stretch occupies residues 76–79 (DCPG). GTP contacts are provided by residues 76 to 80 (DCPGH) and 131 to 134 (NKVD). Positions 131–134 (NKVD) are G4. The segment at 169–171 (SAL) is G5.

The protein belongs to the TRAFAC class translation factor GTPase superfamily. Classic translation factor GTPase family. EF-Tu/EF-1A subfamily. Monomer.

The protein localises to the cytoplasm. It catalyses the reaction GTP + H2O = GDP + phosphate + H(+). In terms of biological role, GTP hydrolase that promotes the GTP-dependent binding of aminoacyl-tRNA to the A-site of ribosomes during protein biosynthesis. This is Elongation factor Tu 2 from Bartonella quintana (strain Toulouse) (Rochalimaea quintana).